Here is a 445-residue protein sequence, read N- to C-terminus: Gastrula zinc finger protein 5-1 (445 aa).

The interval Met1–Gln38 is disordered. Residue Ser89 is modified to Phosphoserine; by CK2. The C2H2-type 1; atypical zinc-finger motif lies at Phe185–His210. 7 C2H2-type zinc fingers span residues Phe239–His261, Phe267–His289, Tyr295–His317, Tyr323–His345, Phe351–His373, Phe379–His401, and Phe407–His429.

Binds to RNA homomers. The protein is Gastrula zinc finger protein 5-1 of Xenopus laevis (African clawed frog).